The following is a 100-amino-acid chain: Large ribosomal subunit protein bL27 (100 aa).

The propeptide occupies 1–9 (MLKMNLQLF).

This sequence belongs to the bacterial ribosomal protein bL27 family. The N-terminus is cleaved by ribosomal processing cysteine protease Prp.

The polypeptide is Large ribosomal subunit protein bL27 (Clostridium perfringens (strain ATCC 13124 / DSM 756 / JCM 1290 / NCIMB 6125 / NCTC 8237 / Type A)).